The sequence spans 223 residues: UPF0441 protein YgiB (223 aa).

A compositionally biased stretch (low complexity) spans 178–195 (TVPKTAMAPKPATTTTVT). The segment at 178–223 (TVPKTAMAPKPATTTTVTRGGFGESVAKQSTMQRSATGTSSRSMGG) is disordered. The span at 204–223 (AKQSTMQRSATGTSSRSMGG) shows a compositional bias: polar residues.

This sequence belongs to the UPF0441 family.

This chain is UPF0441 protein YgiB, found in Shigella flexneri serotype 5b (strain 8401).